The primary structure comprises 314 residues: THAP domain-containing protein 11 (314 aa).

The THAP-type zinc-finger motif lies at 1-80; that stretch reads MPGFTCCVPG…TYTVRVPTIF (80 aa). Positions 85-111 are disordered; it reads VNERKVARRPAGAAAARRRQQQQQQQQ. A compositionally biased stretch (low complexity) spans 93-111; that stretch reads RPAGAAAARRRQQQQQQQQ. Positions 243-246 match the HCFC1-binding motif (HBM) motif; sequence DHSY. Positions 255-305 form a coiled coil; that stretch reads EELLRKLNEQRDILALMEVKMKEMKGSIRHLRLTEAKLREELREKDRLLAM.

The protein belongs to the THAP11 family. As to quaternary structure, forms homodimers. Interacts via HBM with HCFC1. Forms a complex with HCFC1 and ZNF143. As to expression, expressed in skin fibroblasts.

The protein localises to the nucleus. Its subcellular location is the cytoplasm. Its function is as follows. Transcription factor, which has both transcriptional activation and repression activities. Also modulates chromatin accessibility. In complex with HCFC1 and ZNF143, regulates the expression of several genes, including AP2S1, ESCO2, OPHN1, RBL1, UBXN8 and ZNF32. May regulate the expression of genes that encode both cytoplasmic and mitochondrial ribosomal proteins. Required for normal mitochondrial development and function. Regulates mitochondrial gene expression, including that of components of the electron transport chain. Involved in the maintainance of pluripotency in early embryonic cells, possibly through its action on mitochondrial maturation which is required to meet high energy demands of these cells. Required for early development of retina, preventing premature exit of retinal progenitor cells from the cell cycle. This effect may also be mediated by its action on mitochondria. Through the regulation of MMACHC gene expression, controls cobalamin metabolism. Required for normal brain development and neural precursor differentiation. Involved in cell growth. This Homo sapiens (Human) protein is THAP domain-containing protein 11 (THAP11).